A 35-amino-acid chain; its full sequence is Photosystem II reaction center protein M (35 aa).

The helical transmembrane segment at 7–27 (GFLASLLFVLVPSVFLIVLYI) threads the bilayer.

The protein belongs to the PsbM family. As to quaternary structure, PSII is composed of 1 copy each of membrane proteins PsbA, PsbB, PsbC, PsbD, PsbE, PsbF, PsbH, PsbI, PsbJ, PsbK, PsbL, PsbM, PsbT, PsbX, PsbY, PsbZ, Psb30/Ycf12, peripheral proteins PsbO, CyanoQ (PsbQ), PsbU, PsbV and a large number of cofactors. It forms dimeric complexes.

It localises to the cellular thylakoid membrane. Functionally, one of the components of the core complex of photosystem II (PSII). PSII is a light-driven water:plastoquinone oxidoreductase that uses light energy to abstract electrons from H(2)O, generating O(2) and a proton gradient subsequently used for ATP formation. It consists of a core antenna complex that captures photons, and an electron transfer chain that converts photonic excitation into a charge separation. This subunit is found at the monomer-monomer interface. In Synechococcus elongatus (strain ATCC 33912 / PCC 7942 / FACHB-805) (Anacystis nidulans R2), this protein is Photosystem II reaction center protein M.